The chain runs to 341 residues: MKALSKLKAEEGIWMTDVPQPELGHNDIMIKIRKTAICGTDVHIYNWDEWSQKTIPVPMVVGHEYVGEVVAIGQEVKGFNIGDRVSGEGHITCGHCRNCRGGRTHLCRNTVGVGVNRPGSFAEYLVIPAFNAFKIPDNISDELAAIFDPFGNAVHTALSFDLVGEDVLVSGAGPIGIMAAAVCKHVGARHVVIADVNEYRLDLARKMGVTRAVNVSKENLNDVMTELGMTEGFDVGLEMSGAPPAFRSLLNSMNHGGRIAMLGIPPSDMSIDWNQVIFKGLFIKGIYGREMFETWYKMAALIQSGLDLTPIITHRFPIDEFQQGFDAMRSGKSGKVVLSWD.

Cys38 serves as a coordination point for Zn(2+). Residues Thr40 and His43 each act as charge relay system in the active site. Zn(2+)-binding residues include His63, Glu64, Cys93, Cys96, Cys99, and Cys107. Residues Ile175, Asp195, Arg200, 262–264, and 286–287 contribute to the NAD(+) site; these read LGI and IY.

This sequence belongs to the zinc-containing alcohol dehydrogenase family. As to quaternary structure, homotetramer. Zn(2+) is required as a cofactor.

It is found in the cytoplasm. It catalyses the reaction L-threonine + NAD(+) = (2S)-2-amino-3-oxobutanoate + NADH + H(+). It functions in the pathway amino-acid degradation; L-threonine degradation via oxydo-reductase pathway; glycine from L-threonine: step 1/2. In terms of biological role, catalyzes the NAD(+)-dependent oxidation of L-threonine to 2-amino-3-ketobutyrate. The chain is L-threonine 3-dehydrogenase from Yersinia pestis bv. Antiqua (strain Antiqua).